We begin with the raw amino-acid sequence, 99 residues long: Aspartyl/glutamyl-tRNA(Asn/Gln) amidotransferase subunit C (99 aa).

The protein belongs to the GatC family. As to quaternary structure, heterotrimer of A, B and C subunits.

The enzyme catalyses L-glutamyl-tRNA(Gln) + L-glutamine + ATP + H2O = L-glutaminyl-tRNA(Gln) + L-glutamate + ADP + phosphate + H(+). It carries out the reaction L-aspartyl-tRNA(Asn) + L-glutamine + ATP + H2O = L-asparaginyl-tRNA(Asn) + L-glutamate + ADP + phosphate + 2 H(+). Its function is as follows. Allows the formation of correctly charged Asn-tRNA(Asn) or Gln-tRNA(Gln) through the transamidation of misacylated Asp-tRNA(Asn) or Glu-tRNA(Gln) in organisms which lack either or both of asparaginyl-tRNA or glutaminyl-tRNA synthetases. The reaction takes place in the presence of glutamine and ATP through an activated phospho-Asp-tRNA(Asn) or phospho-Glu-tRNA(Gln). This Burkholderia thailandensis (strain ATCC 700388 / DSM 13276 / CCUG 48851 / CIP 106301 / E264) protein is Aspartyl/glutamyl-tRNA(Asn/Gln) amidotransferase subunit C.